We begin with the raw amino-acid sequence, 192 residues long: Peptidyl-tRNA hydrolase (192 aa).

Tyr-17 provides a ligand contact to tRNA. His-22 functions as the Proton acceptor in the catalytic mechanism. Tyr-68, Asn-70, and Asn-116 together coordinate tRNA.

Belongs to the PTH family. As to quaternary structure, monomer.

The protein resides in the cytoplasm. It carries out the reaction an N-acyl-L-alpha-aminoacyl-tRNA + H2O = an N-acyl-L-amino acid + a tRNA + H(+). Hydrolyzes ribosome-free peptidyl-tRNAs (with 1 or more amino acids incorporated), which drop off the ribosome during protein synthesis, or as a result of ribosome stalling. Functionally, catalyzes the release of premature peptidyl moieties from peptidyl-tRNA molecules trapped in stalled 50S ribosomal subunits, and thus maintains levels of free tRNAs and 50S ribosomes. This is Peptidyl-tRNA hydrolase from Mycobacterium sp. (strain JLS).